Here is an 83-residue protein sequence, read N- to C-terminus: MMNVSLKLSFLVFILVIMSNLGSEARELAGVNEIFEIAARSSNNAGTARALQQAPPCKRDVDCSFECPKGGFCNDRLGTCDCF.

An N-terminal signal peptide occupies residues 1–25 (MMNVSLKLSFLVFILVIMSNLGSEA). Disulfide bonds link Cys57/Cys73, Cys63/Cys80, and Cys67/Cys82.

It belongs to the DEFL family.

Its subcellular location is the secreted. In Arabidopsis thaliana (Mouse-ear cress), this protein is Putative defensin-like protein 257.